The sequence spans 200 residues: MTAQVDAVILAGGMARRMGGNDKGLVELENRPMIEHAIERIQPQVKEILINANRNQNRYSEFGFKVISDQDTGYLGPLAGMITAMSNTDAEYLLVIPCDCPLLPTDLVARMLAKLTAEDAELAVASDGKREQPVVMLLKPSLRASMKAFLDAGERKIDFWYAKHHYVVAEFSDQPNAFVNVNTPEQKQQLGEAIANEKNY.

Residues 10-12 (LAG), K23, N51, D69, and D99 each bind GTP. Mg(2+) is bound at residue D99.

The protein belongs to the MobA family. As to quaternary structure, monomer. The cofactor is Mg(2+).

The protein resides in the cytoplasm. It carries out the reaction Mo-molybdopterin + GTP + H(+) = Mo-molybdopterin guanine dinucleotide + diphosphate. Transfers a GMP moiety from GTP to Mo-molybdopterin (Mo-MPT) cofactor (Moco or molybdenum cofactor) to form Mo-molybdopterin guanine dinucleotide (Mo-MGD) cofactor. The polypeptide is Molybdenum cofactor guanylyltransferase (Shewanella halifaxensis (strain HAW-EB4)).